The sequence spans 761 residues: Probable ATP-dependent RNA helicase DDX20 (761 aa).

The short motif at 26–54 is the Q motif element; it reads VEFSSLLLSKPVLEGLSASGFQRPSPIQL. ATP is bound by residues Arg-48, Gln-53, 70-77, and 73-78; these read AKSGTGKT and GTGKTC. One can recognise a Helicase ATP-binding domain in the interval 57–231; the sequence is IPLGRCGLDL…SRYMREPTFV (175 aa). The DEAD box signature appears at 175–178; sequence DEAD. The Helicase C-terminal domain occupies 266–415; that stretch reads SLLELFSKIP…PIPPGIMEEA (150 aa). Disordered regions lie at residues 428 to 525 and 570 to 720; these read PKIP…KSHT and HDAH…EAGQ. Basic and acidic residues predominate over residues 443 to 456; that stretch reads KSEQMKSKPSRESH. A compositionally biased stretch (polar residues) spans 498–512; that stretch reads QHDSTITQKQQNNTL. Low complexity-rich tracts occupy residues 600–613 and 623–635; these read SELS…SESS and ESSS…STLE. The segment covering 655–679 has biased composition (polar residues); the sequence is TLPSTRVPQQATRSKQKPCQPQSQD. A compositionally biased stretch (basic residues) spans 683 to 707; the sequence is HHNLPHKHRTASKSSRRPTGPKRRT.

Belongs to the DEAD box helicase family. DDX20 subfamily. In terms of assembly, part of the core SMN complex.

It is found in the cytoplasm. Its subcellular location is the nucleus. The catalysed reaction is ATP + H2O = ADP + phosphate + H(+). It catalyses the reaction a ribonucleoside 5'-triphosphate + H2O = a ribonucleoside 5'-diphosphate + phosphate + H(+). Functionally, the SMN complex catalyzes the assembly of small nuclear ribonucleoproteins (snRNPs), the building blocks of the spliceosome, and thereby plays an important role in the splicing of cellular pre-mRNAs. Most spliceosomal snRNPs contain a common set of Sm proteins SNRPB, SNRPD1, SNRPD2, SNRPD3, SNRPE, SNRPF and SNRPG that assemble in a heptameric protein ring on the Sm site of the small nuclear RNA to form the core snRNP (Sm core). In the cytosol, the Sm proteins SNRPD1, SNRPD2, SNRPE, SNRPF and SNRPG are trapped in an inactive 6S pICln-Sm complex by the chaperone CLNS1A that controls the assembly of the core snRNP. To assemble core snRNPs, the SMN complex accepts the trapped 5Sm proteins from CLNS1A forming an intermediate. Binding of snRNA inside 5Sm triggers eviction of the SMN complex, thereby allowing binding of SNRPD3 and SNRPB to complete assembly of the core snRNP. May also play a role in the metabolism of small nucleolar ribonucleoprotein (snoRNPs). This is Probable ATP-dependent RNA helicase DDX20 (ddx20) from Danio rerio (Zebrafish).